The primary structure comprises 431 residues: Sorting nexin-31 (431 aa).

A PX domain is found at 1–107 (MHICIPVTEE…DYFRKLQMDT (107 aa)).

This sequence belongs to the sorting nexin family.

In terms of biological role, may be involved in protein trafficking. This Xenopus laevis (African clawed frog) protein is Sorting nexin-31 (snx31).